The chain runs to 442 residues: MSFLWSFASFIIVISVLVAVHEYGHFWAARKCGIQVHRFSIGFGKVLWSRTDKQGTEFVISAIPLGGYVKMLDGRNEVVPPELSSRAFDQKSVLQRAFVIAAGPIANFLFAILAYFTIYTVGIPTVKPVIADISSNSIAAQAQIEPNTQIMAVDGTKVSDWETINMLLATKMGNDEIHLTLSPFGSSIEQHKVLNTKDWRFDPEKESAMSSLGLQPVRTKVDMILSKVEVNSPADKAGLKAGDRIYAGEQLISWQQFVQFVQEGKPFNVKVERDGQFSFVVLTPELNKKGRWYVGIAPTAAPISDIYRTELKYGILEALQKGVEKTIQLSWLTIKVIGKLFTGDLALKNLGGPISIAKGAGISSEIGLIYYLGFMALISVNLGIMNLFPLPVLDGGHLVFLAAEAVRGKPLSERIQNLSYRIGAAILMALMGFALFNDFLRL.

Histidine 21 contributes to the Zn(2+) binding site. Glutamate 22 is an active-site residue. Histidine 25 lines the Zn(2+) pocket. A helical transmembrane segment spans residues 97 to 119; it reads AFVIAAGPIANFLFAILAYFTIY. The 89-residue stretch at 198–286 folds into the PDZ domain; it reads DWRFDPEKES…FSFVVLTPEL (89 aa). Helical transmembrane passes span 366–388 and 418–440; these read IGLIYYLGFMALISVNLGIMNLF and LSYRIGAAILMALMGFALFNDFL.

Belongs to the peptidase M50B family. It depends on Zn(2+) as a cofactor.

It is found in the cell inner membrane. This Pasteurella multocida (strain Pm70) protein is Putative zinc metalloprotease PM1991.